A 1115-amino-acid polypeptide reads, in one-letter code: MRLLRRNMLVLTLLVCVFSSIISCSIPLSSRTSRRQIVEDEVASTKKLNFNYGVDKNINSPIPAPRTTEGLPNMKLSSYPTPNLLNTADNRRANKKGRRAANSISVPYLENRSLNELSLSDILIAADVEGGLHAVDRRNGHIIWSIEPENFQPLIEIQEPSRLETYETLIIEPFGDGNIYYFNAHQGLQKLPLSIRQLVSTSPLHLKTNIVVNDSGKIVEDEKVYTGSMRTIMYTINMLNGEIISAFGPGSKNGYFGSQSVDCSPEEKIKLQECENMIVIGKTIFELGIHSYDGASYNVTYSTWQQNVLDVPLALQNTFSKDGMCIAPFRDKSLLASDLDFRIARWVSPTFPGIIVGLFDVFNDLRTNENILVPHPFNPGDHESISSNKVYLDQTSNLSWFALSSQNFPSLVESAPISRYASSDRWRVSSIFEDETLFKNAIMGVHQIYNNEYDHLYENYEKTNSLDTTHKYPPLMIDSSVDTTDLHQNNEMNSLKEYMSPEDLEAYRKKIHEQISRELDEKNQNSLLLKFGSLVYRIIETGVFLLLFLIFCAILQRFKILPPLYVLLSKIGFMPEKEIPIVESKSLNCPSSSENVTKPFDMKSGKQVVFEGAVNDGSLKSEKDNDDADEDDEKSLDLTTEKKKRKRGSRGGKKGRKSRIANIPNFEQSLKNLVVSEKILGYGSSGTVVFQGSFQGRPVAVKRMLIDFCDIALMEIKLLTESDDHPNVIRYYCSETTDRFLYIALELCNLNLQDLVESKNVSDENLKLQKEYNPISLLRQIASGVAHLHSLKIIHRDLKPQNILVSTSSRFTADQQTGAENLRILISDFGLCKKLDSGQSSFRTNLNNPSGTSGWRAPELLEESNNLQCQVETEHSSSRHTVVSSDSFYDPFTKRRLTRSIDIFSMGCVFYYILSKGKHPFGDKYSRESNIIRGIFSLDEMKCLHDRSLIAEATDLISQMIDHDPLKRPTAMKVLRHPLFWPKSKKLEFLLKVSDRLEIENRDPPSALLMKFDAGSDFVIPSGDWTVKFDKTFMDNLERYRKYHSSKLMDLLRALRNKYHHFMDLPEDIAELMGPVPDGFYDYFTKRFPNLLIGVYMIVKENLSDDQILREFLYS.

A signal peptide spans Met1–Phe18. Residues Ser19–Ser526 lie on the Lumenal side of the membrane. N-linked (GlcNAc...) asparagine glycans are attached at residues Asn111, Asn213, Asn298, and Asn397. Residues Leu527–Leu555 form a helical membrane-spanning segment. Over Gln556–Ser1115 the chain is Cytoplasmic. The disordered stretch occupies residues Gly617 to Ser658. Residues Asp624–Lys634 are compositionally biased toward acidic residues. The span at Lys642–Ser658 shows a compositional bias: basic residues. The region spanning Val674–Phe980 is the Protein kinase domain. Ser684, Lys702, Glu746, Cys748, and Asn751 together coordinate ADP. Asp797 (proton acceptor) is an active-site residue. Mg(2+)-binding residues include Asn802 and Asp828. Ser840 and Ser841 each carry phosphoserine; by autocatalysis. Thr844 carries the post-translational modification Phosphothreonine; by autocatalysis. The 133-residue stretch at Lys983 to Ser1115 folds into the KEN domain.

It belongs to the protein kinase superfamily. Ser/Thr protein kinase family. As to quaternary structure, homodimer; in response to the accumulation of unfolded proteins. Dimerization of lumenal domains help position the cytoplasmic kinase domains optimally for autophosphorylation to initiate the unfolded protein response. Dimerization of the kinase domain is important for ribonuclease activity. Interacts (when phosphorylated) with PTC2; the interaction is direct and serves to attenuate the endoplasmic reticulum unfolded protein response. Mg(2+) is required as a cofactor. Post-translationally, autophosphorylated mainly on serine residues; phosphorylation enables nucleotide binding by the active site.

The protein resides in the endoplasmic reticulum membrane. The catalysed reaction is L-seryl-[protein] + ATP = O-phospho-L-seryl-[protein] + ADP + H(+). It carries out the reaction L-threonyl-[protein] + ATP = O-phospho-L-threonyl-[protein] + ADP + H(+). Its activity is regulated as follows. The kinase domain is activated by trans-autophosphorylation. Kinase activity is required for activation of the endoribonuclease domain. Inactivated by dephosphorylation via recruitment of PTC2. Its function is as follows. Senses unfolded proteins in the lumen of the endoplasmic reticulum via its N-terminal domain which leads to enzyme auto-activation. The active endoribonuclease domain splices HAC1 precursor mRNA to produce the mature form which then induces transcription of UPR target genes. The chain is Serine/threonine-protein kinase/endoribonuclease IRE1 (IRE1) from Saccharomyces cerevisiae (strain ATCC 204508 / S288c) (Baker's yeast).